Consider the following 953-residue polypeptide: Communesin biosynthesis cluster-specific transcription factor cnsN (953 aa).

The segment at 371–418 (ELESTSPRTSHSSLSQDDTASLHSRSSLSSSPGRFPPSQKLVATSDSP) is disordered. Over residues 374–408 (STSPRTSHSSLSQDDTASLHSRSSLSSSPGRFPPS) the composition is skewed to low complexity.

It is found in the nucleus. Transcriptional regulator; part of the gene cluster that mediates the biosynthesis of communesins, a prominent class of indole alkaloids with great potential as pharmaceuticals. This chain is Communesin biosynthesis cluster-specific transcription factor cnsN, found in Penicillium expansum (Blue mold rot fungus).